We begin with the raw amino-acid sequence, 287 residues long: MEIVRDIKTMREKVAEMKRQGKSVGLVPTMGYLHEGHLALIDTARKENDVVVVSDFVNPLQFGPNEDYLVYPRDMDRDAQLCSEHGVDFLFVPTVEEMYPKKGNQVDVFVDVKHLDENLCGRFRPGHFRGVVTVVTKLFNIVSPNRAYFGMKDIQQLRIIEEMVNDLNMNIEIVPVPTVREPSGLALSSRNTYLSAEEREKAASIYKSLLMAKDLILEKGVISTAEVIGTCTRFLSQQGFKVQYFQLVDYDTLELLPKIEPPQKIIIATAVFLGKVRLIDNLVIEVR.

Position 30 to 37 (30 to 37 (MGYLHEGH)) interacts with ATP. His-37 serves as the catalytic Proton donor. Gln-61 is a (R)-pantoate binding site. Gln-61 provides a ligand contact to beta-alanine. Position 150-153 (150-153 (GMKD)) interacts with ATP. Gln-156 contacts (R)-pantoate. Residues Val-179 and 187-190 (LSSR) each bind ATP.

The protein belongs to the pantothenate synthetase family. As to quaternary structure, homodimer.

It localises to the cytoplasm. The catalysed reaction is (R)-pantoate + beta-alanine + ATP = (R)-pantothenate + AMP + diphosphate + H(+). It participates in cofactor biosynthesis; (R)-pantothenate biosynthesis; (R)-pantothenate from (R)-pantoate and beta-alanine: step 1/1. Its function is as follows. Catalyzes the condensation of pantoate with beta-alanine in an ATP-dependent reaction via a pantoyl-adenylate intermediate. This is Pantothenate synthetase from Coprothermobacter proteolyticus (strain ATCC 35245 / DSM 5265 / OCM 4 / BT).